The following is a 125-amino-acid chain: Prefoldin subunit beta (125 aa).

It belongs to the prefoldin subunit beta family. In terms of assembly, heterohexamer of two alpha and four beta subunits.

It is found in the cytoplasm. Functionally, molecular chaperone capable of stabilizing a range of proteins. Seems to fulfill an ATP-independent, HSP70-like function in archaeal de novo protein folding. The polypeptide is Prefoldin subunit beta (Sulfolobus acidocaldarius (strain ATCC 33909 / DSM 639 / JCM 8929 / NBRC 15157 / NCIMB 11770)).